A 359-amino-acid polypeptide reads, in one-letter code: Fructose-bisphosphate aldolase (359 aa).

Ser-50 contacts D-glyceraldehyde 3-phosphate. Asp-83 functions as the Proton donor in the catalytic mechanism. 4 residues coordinate Zn(2+): His-84, Asp-105, Glu-142, and His-198. Gly-199 contributes to the dihydroxyacetone phosphate binding site. His-232 is a Zn(2+) binding site. Residues 233 to 235 (GSS) and 275 to 278 (NIDT) each bind dihydroxyacetone phosphate.

It belongs to the class II fructose-bisphosphate aldolase family. As to quaternary structure, homodimer. It depends on Zn(2+) as a cofactor.

It catalyses the reaction beta-D-fructose 1,6-bisphosphate = D-glyceraldehyde 3-phosphate + dihydroxyacetone phosphate. It participates in carbohydrate biosynthesis; Calvin cycle. It functions in the pathway carbohydrate degradation; glycolysis; D-glyceraldehyde 3-phosphate and glycerone phosphate from D-glucose: step 4/4. Functionally, catalyzes the aldol condensation of dihydroxyacetone phosphate (DHAP or glycerone-phosphate) with glyceraldehyde 3-phosphate (G3P) to form fructose 1,6-bisphosphate (FBP) in gluconeogenesis and the reverse reaction in glycolysis. The chain is Fructose-bisphosphate aldolase (cbbA) from Rhizobium meliloti (strain 1021) (Ensifer meliloti).